The sequence spans 313 residues: MIVTVTMNPSIDISYLLDHLKLDTVNRTSQVTKTPGGKGLNVTRVIHDLGGDVIATGVLGGFHGAFIANELKKANIPQAFTSIKEETRDSIAILHEGNQTEILEAGPTVSPEEISNFLENFDQLIKQAEIVTISGSLAKGLPSDFYQELVQKAHAQEVKVLLDTSGDSLRQVLQGPWKPYLIKPNLEELEGLLGQDFSENPLAAVQTALTKPMFAGIEWIVISLGKDGAIAKHHDQFYRVKIPTIQAKNPVGSGDATIAGLAYGLAKDAPAAELLKWGMAAGMANAQERMTGHVDVENVKKHLMNIQVVEIAK.

It belongs to the carbohydrate kinase PfkB family. LacC subfamily.

It carries out the reaction D-tagatofuranose 6-phosphate + ATP = D-tagatofuranose 1,6-bisphosphate + ADP + H(+). It participates in carbohydrate metabolism; D-tagatose 6-phosphate degradation; D-glyceraldehyde 3-phosphate and glycerone phosphate from D-tagatose 6-phosphate: step 1/2. The protein is Tagatose-6-phosphate kinase of Enterococcus faecalis (strain ATCC 700802 / V583).